A 151-amino-acid polypeptide reads, in one-letter code: Small ribosomal subunit protein uS15 (151 aa).

The protein belongs to the universal ribosomal protein uS15 family.

This chain is Small ribosomal subunit protein uS15 (RPS13), found in Agaricus bisporus (White button mushroom).